Reading from the N-terminus, the 1152-residue chain is Alpha-mannosidase 2x (1152 aa).

Topologically, residues 1–5 are cytoplasmic; sequence MKLKK. Residues 6-26 form a helical; Signal-anchor for type II membrane protein membrane-spanning segment; the sequence is QVTVCGAAIFCVAVFSLYLML. Topologically, residues 27 to 796 are lumenal; it reads DRVQHDPARH…VDEEQEQQME (770 aa). Positions 43-74 form a coiled coil; sequence PRSQISVLQNRIEQLEQLLEENHDIISRIKDS. The Zn(2+) site is built by histidine 175 and aspartate 177. Asparagine 225 carries N-linked (GlcNAc...) asparagine glycosylation. Aspartate 289 lines the Zn(2+) pocket. Aspartate 289 serves as the catalytic Nucleophile. Asparagine 305 is a glycosylation site (N-linked (GlcNAc...) asparagine). Histidine 569 lines the Zn(2+) pocket.

Belongs to the glycosyl hydrolase 38 family. As to quaternary structure, homodimer; disulfide-linked. Interacts with MGAT4D. It depends on Zn(2+) as a cofactor.

Its subcellular location is the golgi apparatus membrane. It catalyses the reaction N(4)-{beta-D-GlcNAc-(1-&gt;2)-alpha-D-Man-(1-&gt;3)-[alpha-D-Man-(1-&gt;3)-[alpha-D-Man-(1-&gt;6)]-alpha-D-Man-(1-&gt;6)]-beta-D-Man-(1-&gt;4)-beta-D-GlcNAc-(1-&gt;4)-beta-D-GlcNAc}-L-asparaginyl-[protein] + 2 H2O = 2 alpha-D-mannopyranose + an N(4)-{beta-D-GlcNAc-(1-&gt;2)-alpha-D-Man-(1-&gt;3)-[alpha-D-Man-(1-&gt;6)]-beta-D-Man-(1-&gt;4)-beta-D-GlcNAc-(1-&gt;4)-beta-D-GlcNAc}-L-asparaginyl-[protein]. It participates in protein modification; protein glycosylation. Functionally, catalyzes the first committed step in the biosynthesis of complex N-glycans. It controls conversion of high mannose to complex N-glycans; the final hydrolytic step in the N-glycan maturation pathway. The polypeptide is Alpha-mannosidase 2x (Man2a2) (Mus musculus (Mouse)).